A 357-amino-acid polypeptide reads, in one-letter code: Peptide chain release factor 1 (357 aa).

Position 232 is an N5-methylglutamine (Q232).

This sequence belongs to the prokaryotic/mitochondrial release factor family. Methylated by PrmC. Methylation increases the termination efficiency of RF1.

It is found in the cytoplasm. In terms of biological role, peptide chain release factor 1 directs the termination of translation in response to the peptide chain termination codons UAG and UAA. The polypeptide is Peptide chain release factor 1 (Maridesulfovibrio salexigens (strain ATCC 14822 / DSM 2638 / NCIMB 8403 / VKM B-1763) (Desulfovibrio salexigens)).